Reading from the N-terminus, the 505-residue chain is Deoxyguanosinetriphosphate triphosphohydrolase (505 aa).

In terms of domain architecture, HD spans 66-273 (RLTHSMEVQQ…MEAADDISYC (208 aa)).

It belongs to the dGTPase family. Type 1 subfamily. Homotetramer. Mg(2+) serves as cofactor.

The catalysed reaction is dGTP + H2O = 2'-deoxyguanosine + triphosphate + H(+). Functionally, dGTPase preferentially hydrolyzes dGTP over the other canonical NTPs. The sequence is that of Deoxyguanosinetriphosphate triphosphohydrolase from Escherichia fergusonii (strain ATCC 35469 / DSM 13698 / CCUG 18766 / IAM 14443 / JCM 21226 / LMG 7866 / NBRC 102419 / NCTC 12128 / CDC 0568-73).